Consider the following 362-residue polypeptide: Adenosine deaminase (362 aa).

Zn(2+) is bound by residues histidine 19 and histidine 21. Substrate contacts are provided by histidine 21, aspartate 23, and glycine 181. Histidine 208 contributes to the Zn(2+) binding site. The active-site Proton donor is the glutamate 211. Aspartate 300 is a Zn(2+) binding site.

It belongs to the metallo-dependent hydrolases superfamily. Adenosine and AMP deaminases family. Adenosine deaminase subfamily. Zn(2+) serves as cofactor.

It catalyses the reaction adenosine + H2O + H(+) = inosine + NH4(+). It carries out the reaction 2'-deoxyadenosine + H2O + H(+) = 2'-deoxyinosine + NH4(+). Functionally, catalyzes the hydrolytic deamination of adenosine and 2-deoxyadenosine. This chain is Adenosine deaminase, found in Mycobacterium marinum (strain ATCC BAA-535 / M).